The sequence spans 685 residues: DNA-directed RNA polymerase subunit beta' (685 aa).

Residues Cys69, Cys71, Cys87, and Cys90 each contribute to the Zn(2+) site. The Mg(2+) site is built by Asp489, Asp491, and Asp493.

It belongs to the RNA polymerase beta' chain family. RpoC1 subfamily. In plastids the minimal PEP RNA polymerase catalytic core is composed of four subunits: alpha, beta, beta', and beta''. When a (nuclear-encoded) sigma factor is associated with the core the holoenzyme is formed, which can initiate transcription. Requires Mg(2+) as cofactor. Zn(2+) is required as a cofactor.

The protein resides in the plastid. It is found in the chloroplast. The catalysed reaction is RNA(n) + a ribonucleoside 5'-triphosphate = RNA(n+1) + diphosphate. DNA-dependent RNA polymerase catalyzes the transcription of DNA into RNA using the four ribonucleoside triphosphates as substrates. The chain is DNA-directed RNA polymerase subunit beta' from Gossypium hirsutum (Upland cotton).